The chain runs to 64 residues: Large ribosomal subunit protein uL30 (64 aa).

It belongs to the universal ribosomal protein uL30 family. As to quaternary structure, part of the 50S ribosomal subunit.

This is Large ribosomal subunit protein uL30 from Beijerinckia indica subsp. indica (strain ATCC 9039 / DSM 1715 / NCIMB 8712).